The following is a 205-amino-acid chain: Small ribosomal subunit protein uS4 (205 aa).

The segment at 19–45 (IWGRPKSPVNRREYGPGQHGQRRKGKL) is disordered. The region spanning 94 to 157 (SRLDAVVYRA…KQLAIVLEAV (64 aa)) is the S4 RNA-binding domain.

Belongs to the universal ribosomal protein uS4 family. Part of the 30S ribosomal subunit. Contacts protein S5. The interaction surface between S4 and S5 is involved in control of translational fidelity.

In terms of biological role, one of the primary rRNA binding proteins, it binds directly to 16S rRNA where it nucleates assembly of the body of the 30S subunit. Its function is as follows. With S5 and S12 plays an important role in translational accuracy. This is Small ribosomal subunit protein uS4 from Brucella suis biovar 1 (strain 1330).